A 1053-amino-acid polypeptide reads, in one-letter code: DIS3-like exonuclease 1 (1053 aa).

Residues 236 to 310 enclose the CSD1 domain; the sequence is AGIKSGRYIQ…KSEWKGRTAA (75 aa). A disordered region spans residues 306 to 332; that stretch reads GRTAALGENDSDDKASGESPSEPMPTG. The 67-residue stretch at 365-431 folds into the CSD2 domain; sequence ILVTPWDYRI…GEIATILVEN (67 aa). Residues 465–816 form the RNB domain; it reads RKDLRTTHLV…VHRLLMAAIS (352 aa). Phosphoserine is present on S989.

Belongs to the RNR ribonuclease family. As to quaternary structure, component of the RNA exosome complex. The catalytically inactive RNA exosome core (Exo-9) complex is believed to associate with catalytic subunits EXOSC10, and DIS3 or DIS3L in cytoplasmic- and nuclear-specific RNA exosome complex forms. Requires Mg(2+) as cofactor.

It localises to the cytoplasm. It carries out the reaction Exonucleolytic cleavage in the 3'- to 5'-direction to yield nucleoside 5'-phosphates.. In terms of biological role, catalytic component of the RNA exosome complex which has 3'-&gt;5' exoribonuclease activity and participates in a multitude of cellular RNA processing and degradation events. In the cytoplasm, the RNA exosome complex is involved in general mRNA turnover and specifically degrades inherently unstable mRNAs containing AU-rich elements (AREs) within their 3' untranslated regions, and in RNA surveillance pathways, preventing translation of aberrant mRNAs. It seems to be involved in degradation of histone mRNA. The chain is DIS3-like exonuclease 1 (Dis3l) from Mus musculus (Mouse).